The primary structure comprises 162 residues: MERIKRFLKSFLLFELLKGMKVTGRYLFAPKVTVHYPEEKTPQSPRFRGLHALRRYPNGEERCIACKLCEAVCPALAITIESEQRDDGTRRTTRYDIDLIKCIFCGFCEEACPVDAIVETRVLEYHGEVRGDLTYTKEMLLAVGDRYEEQIAKDRAADAPYR.

2 4Fe-4S ferredoxin-type domains span residues 53–83 (LRRYPNGEERCIACKLCEAVCPALAITIESE) and 93–122 (TRYDIDLIKCIFCGFCEEACPVDAIVETRV). The [4Fe-4S] cluster site is built by Cys-63, Cys-66, Cys-69, Cys-73, Cys-102, Cys-105, Cys-108, and Cys-112.

Belongs to the complex I 23 kDa subunit family. NDH-1 is composed of 14 different subunits. Subunits NuoA, H, J, K, L, M, N constitute the membrane sector of the complex. It depends on [4Fe-4S] cluster as a cofactor.

Its subcellular location is the cell inner membrane. It carries out the reaction a quinone + NADH + 5 H(+)(in) = a quinol + NAD(+) + 4 H(+)(out). NDH-1 shuttles electrons from NADH, via FMN and iron-sulfur (Fe-S) centers, to quinones in the respiratory chain. The immediate electron acceptor for the enzyme in this species is believed to be ubiquinone. Couples the redox reaction to proton translocation (for every two electrons transferred, four hydrogen ions are translocated across the cytoplasmic membrane), and thus conserves the redox energy in a proton gradient. In Nitrosomonas eutropha (strain DSM 101675 / C91 / Nm57), this protein is NADH-quinone oxidoreductase subunit I.